Here is an 855-residue protein sequence, read N- to C-terminus: Cone cGMP-specific 3',5'-cyclic phosphodiesterase subunit alpha' (855 aa).

2 consecutive GAF domains span residues 70–219 (SVEL…SIIL) and 251–428 (DVER…GWSL). Residues Ser92, Ser116, 164–167 (DKQT), and Thr171 each bind 3',5'-cyclic GMP. Residues 481–814 (EEKQLVTILK…VEWKSLADEY (334 aa)) form the PDEase domain. Residue His557 is the Proton donor of the active site. A divalent metal cation contacts are provided by His561, His597, Asp598, and Asp718. A disordered region spans residues 823 to 855 (EMKKQEEGNTTEKAVEDSGGGGDDKKSKTCLML). Position 852 is a cysteine methyl ester (Cys852). Cys852 is lipidated: S-geranylgeranyl cysteine. A propeptide spans 853–855 (LML) (removed in mature form).

It belongs to the cyclic nucleotide phosphodiesterase family. Composed of two alpha' subunits that are associated with 3 smaller proteins of 11, 13, and 15 kDa. A divalent metal cation serves as cofactor.

It is found in the cell membrane. The catalysed reaction is 3',5'-cyclic GMP + H2O = GMP + H(+). Functionally, as cone-specific cGMP phosphodiesterase, it plays an essential role in light detection and cone phototransduction by rapidly decreasing intracellular levels of cGMP. This is Cone cGMP-specific 3',5'-cyclic phosphodiesterase subunit alpha' (PDE6C) from Bos taurus (Bovine).